A 149-amino-acid polypeptide reads, in one-letter code: Large ribosomal subunit protein uL13 (149 aa).

It belongs to the universal ribosomal protein uL13 family. As to quaternary structure, part of the 50S ribosomal subunit.

Its function is as follows. This protein is one of the early assembly proteins of the 50S ribosomal subunit, although it is not seen to bind rRNA by itself. It is important during the early stages of 50S assembly. The chain is Large ribosomal subunit protein uL13 from Saccharolobus solfataricus (strain ATCC 35092 / DSM 1617 / JCM 11322 / P2) (Sulfolobus solfataricus).